The chain runs to 478 residues: Lysosome membrane protein 2 (478 aa).

Residues 1–4 lie on the Cytoplasmic side of the membrane; that stretch reads MGRC. Residues 5 to 27 form a helical membrane-spanning segment; it reads CFYTAGTLSLLLLVTSVTLLVAR. At 28–433 the chain is on the lumenal side; sequence VFQKAVDQSI…RLKSMINTTL (406 aa). Asparagine 45, asparagine 68, and asparagine 105 each carry an N-linked (GlcNAc...) asparagine glycan. The interval 155–191 is important for interaction with GBA1; it reads IIEAMLKAYQQKLFVTHTVDELLWGYKDEILSLIHVF. Residues asparagine 206, asparagine 224, asparagine 249, and asparagine 304 are each glycosylated (N-linked (GlcNAc...) asparagine). 2 cysteine pairs are disulfide-bonded: cysteine 274/cysteine 329 and cysteine 312/cysteine 318. N-linked (GlcNAc...) asparagine glycosylation is found at asparagine 325, asparagine 412, and asparagine 430. The chain crosses the membrane as a helical span at residues 434–459; that stretch reads IITNIPYIIMALGVFFGLVFTWLACK. Residues 460 to 478 lie on the Cytoplasmic side of the membrane; that stretch reads GQGSMDEGTADERAPLIRT.

It belongs to the CD36 family. As to quaternary structure, interacts with GBA1. (Microbial infection) Interacts with enterovirus 71 capsid proteins VP1 and VP2.

It is found in the lysosome membrane. Acts as a lysosomal receptor for glucosylceramidase (GBA1) targeting. Functionally, (Microbial infection) Acts as a receptor for enterovirus 71. In Homo sapiens (Human), this protein is Lysosome membrane protein 2 (SCARB2).